The sequence spans 67 residues: DNA gyrase inhibitor YacG (67 aa).

Zn(2+)-binding residues include cysteine 10, cysteine 13, cysteine 29, and cysteine 33.

The protein belongs to the DNA gyrase inhibitor YacG family. Interacts with GyrB. It depends on Zn(2+) as a cofactor.

Functionally, inhibits all the catalytic activities of DNA gyrase by preventing its interaction with DNA. Acts by binding directly to the C-terminal domain of GyrB, which probably disrupts DNA binding by the gyrase. The protein is DNA gyrase inhibitor YacG of Pasteurella multocida (strain Pm70).